A 183-amino-acid polypeptide reads, in one-letter code: Protein P7 (183 aa).

Its subcellular location is the host nucleus. Functionally, may play a role in inhibition of the host immune system by counteracting the type I interferon response. This is Protein P7 from Gadus morhua (Atlantic cod).